We begin with the raw amino-acid sequence, 673 residues long: UvrABC system protein B (673 aa).

Residues 26–414 enclose the Helicase ATP-binding domain; it reads ANFEAGLAKQ…AGEVTELVVR (389 aa). 39–46 is an ATP binding site; sequence GVTGSGKT. The short motif at 92-115 is the Beta-hairpin element; sequence YYDYYQPEAYVPSSDTFIEKDSSI. The region spanning 431–597 is the Helicase C-terminal domain; it reads QVDDLMSEVH…SVERPIADIM (167 aa). 2 stretches are compositionally biased toward basic and acidic residues: residues 600–609 and 618–628; these read ARDDAAEKKS and HVAEETPDYRA. The segment at 600-628 is disordered; that stretch reads ARDDAAEKKSGKGRSKSRHVAEETPDYRA. A UVR domain is found at 635 to 670; that stretch reads AGKLKSLEQKMYQHAKDLEFEAAAQIRDQIQKLKAA.

The protein belongs to the UvrB family. In terms of assembly, forms a heterotetramer with UvrA during the search for lesions. Interacts with UvrC in an incision complex.

The protein localises to the cytoplasm. The UvrABC repair system catalyzes the recognition and processing of DNA lesions. A damage recognition complex composed of 2 UvrA and 2 UvrB subunits scans DNA for abnormalities. Upon binding of the UvrA(2)B(2) complex to a putative damaged site, the DNA wraps around one UvrB monomer. DNA wrap is dependent on ATP binding by UvrB and probably causes local melting of the DNA helix, facilitating insertion of UvrB beta-hairpin between the DNA strands. Then UvrB probes one DNA strand for the presence of a lesion. If a lesion is found the UvrA subunits dissociate and the UvrB-DNA preincision complex is formed. This complex is subsequently bound by UvrC and the second UvrB is released. If no lesion is found, the DNA wraps around the other UvrB subunit that will check the other stand for damage. In Xanthomonas axonopodis pv. citri (strain 306), this protein is UvrABC system protein B.